Here is a 411-residue protein sequence, read N- to C-terminus: Protein PHLOEM PROTEIN 2-LIKE A5 (411 aa).

The region spanning 20-157 is the TIR domain; it reads TGPQVFINFR…KWTEALFSVC (138 aa). Residue Glu94 is part of the active site.

It carries out the reaction NAD(+) + H2O = ADP-D-ribose + nicotinamide + H(+). The protein is Protein PHLOEM PROTEIN 2-LIKE A5 (PP2A5) of Arabidopsis thaliana (Mouse-ear cress).